The primary structure comprises 352 residues: MFGNDIFTRVKRSENKKMAEIAQFLHENDLSVDTTVEVFITVTRDEKLIACGGIAGNIIKCVAISESVRGEGLALTLATELINLAYERHSTHLFIYTKTEYEALFRQCGFSTLTSVPGVMVLMENSATRLKRYAESLKKFRHPGNKIGCIVMNANPFTNGHRYLIQQAAAQCDWLHLFLVKEDSSRFPYEDRLDLVLKGTADIPRLTVHRGSEYIISRATFPCYFIKEQSVINHCYTEIDLKIFRQYLAPALGVTHRFVGTEPFCRVTAQYNQDMRYWLETPTISAPPIELVEIERLRYQEMPISASRVRQLLAKNDLTAIAPLVPAVTLHYLQNLLEHSRQDAAARQKTPA.

Positions 1 to 128 constitute an N-acetyltransferase domain; it reads MFGNDIFTRV…VMVLMENSAT (128 aa).

It catalyses the reaction holo-[citrate lyase ACP] + acetate + ATP = acetyl-[citrate lyase ACP] + AMP + diphosphate. Its function is as follows. Acetylation of prosthetic group (2-(5''-phosphoribosyl)-3'-dephosphocoenzyme-A) of the gamma subunit of citrate lyase. The protein is [Citrate [pro-3S]-lyase] ligase (citC) of Escherichia coli (strain K12).